The primary structure comprises 326 residues: Vitamin B12 import system permease protein BtuC (326 aa).

Helical transmembrane passes span 19-39, 61-81, 88-108, 112-132, 146-166, 184-204, 240-260, 274-294, and 302-322; these read LSVL…LWIL, LAVL…QALF, PGLL…VLLG, LPNW…TLIL, LLAG…AIYF, GGVD…LLWI, GWMV…GLVI, VLLP…DIVA, and ELPI…WLLL.

The protein belongs to the binding-protein-dependent transport system permease family. FecCD subfamily. In terms of assembly, the complex is composed of two ATP-binding proteins (BtuD), two transmembrane proteins (BtuC) and a solute-binding protein (BtuF).

It is found in the cell inner membrane. Part of the ABC transporter complex BtuCDF involved in vitamin B12 import. Involved in the translocation of the substrate across the membrane. The polypeptide is Vitamin B12 import system permease protein BtuC (Escherichia coli O127:H6 (strain E2348/69 / EPEC)).